The primary structure comprises 346 residues: Cell division protein ZipA (346 aa).

The Periplasmic portion of the chain corresponds to 1–6; it reads MEDLQL. The helical transmembrane segment at 7 to 27 threads the bilayer; sequence VLFVLGAIAIVAVLVHGFWSI. The Cytoplasmic segment spans residues 28–346; the sequence is RRQQPKSLKD…DYLHRIRANA (319 aa). 2 disordered regions span residues 76-103 and 121-145; these read ANEA…QPVE and QPDF…RQEP.

This sequence belongs to the ZipA family. As to quaternary structure, interacts with FtsZ via their C-terminal domains.

It localises to the cell inner membrane. Functionally, essential cell division protein that stabilizes the FtsZ protofilaments by cross-linking them and that serves as a cytoplasmic membrane anchor for the Z ring. Also required for the recruitment to the septal ring of downstream cell division proteins. In Shewanella sp. (strain MR-4), this protein is Cell division protein ZipA.